The sequence spans 70 residues: Small ribosomal subunit protein bS21 (70 aa).

This sequence belongs to the bacterial ribosomal protein bS21 family.

The protein is Small ribosomal subunit protein bS21 of Herminiimonas arsenicoxydans.